A 352-amino-acid chain; its full sequence is Protein RecA (352 aa).

Position 65-72 (65-72) interacts with ATP; that stretch reads GPESSGKT.

The protein belongs to the RecA family.

The protein resides in the cytoplasm. Functionally, can catalyze the hydrolysis of ATP in the presence of single-stranded DNA, the ATP-dependent uptake of single-stranded DNA by duplex DNA, and the ATP-dependent hybridization of homologous single-stranded DNAs. It interacts with LexA causing its activation and leading to its autocatalytic cleavage. Plays a functional role in the DNA rearrangement associated with the phenotypic switching from a pathogenic smooth to a nonpathogenic rough form in this bacterium. This chain is Protein RecA, found in Pseudomonas tolaasii.